A 1010-amino-acid chain; its full sequence is Trifunctional purine biosynthetic protein adenosine-3 (1010 aa).

Residue Ala-2 is modified to N-acetylalanine. In terms of domain architecture, ATP-grasp spans 111 to 318; it reads KEFMDRHGIS…LYEVIQSILD (208 aa). Residues 190–193, Glu-197, Arg-220, and Asn-229 contribute to the ATP site; that span reads EELL. Residues Glu-288 and Asn-290 each coordinate Mg(2+). Lys-350 is modified (N6-acetyllysine). The AIRS domain stretch occupies residues 434–809; that stretch reads GLTYKESGVD…HFSVQPKKAR (376 aa). Ser-440 carries the phosphoserine modification. At Thr-682 the chain carries Phosphothreonine. Residue Ser-802 is modified to Phosphoserine. Positions 810–1010 are GART domain; that stretch reads VAVLISGTGS…NGRICWVTED (201 aa). Position 818 to 820 (818 to 820) interacts with N(1)-(5-phospho-beta-D-ribosyl)glycinamide; it reads GSN. (6R)-10-formyltetrahydrofolate is bound by residues Arg-871, 896–899, and Asn-913; that span reads MRIL. The Proton donor role is filled by His-915. 947–951 serves as a coordination point for (6R)-10-formyltetrahydrofolate; it reads AEDVD. 977–980 provides a ligand contact to N(1)-(5-phospho-beta-D-ribosyl)glycinamide; it reads KLAE.

This sequence in the N-terminal section; belongs to the GARS family. It in the central section; belongs to the AIR synthase family. The protein in the C-terminal section; belongs to the GART family. Homodimer. Requires Mg(2+) as cofactor. Mn(2+) serves as cofactor.

The catalysed reaction is 5-phospho-beta-D-ribosylamine + glycine + ATP = N(1)-(5-phospho-beta-D-ribosyl)glycinamide + ADP + phosphate + H(+). It catalyses the reaction 2-formamido-N(1)-(5-O-phospho-beta-D-ribosyl)acetamidine + ATP = 5-amino-1-(5-phospho-beta-D-ribosyl)imidazole + ADP + phosphate + H(+). It carries out the reaction N(1)-(5-phospho-beta-D-ribosyl)glycinamide + (6R)-10-formyltetrahydrofolate = N(2)-formyl-N(1)-(5-phospho-beta-D-ribosyl)glycinamide + (6S)-5,6,7,8-tetrahydrofolate + H(+). The protein operates within purine metabolism; IMP biosynthesis via de novo pathway; 5-amino-1-(5-phospho-D-ribosyl)imidazole from N(2)-formyl-N(1)-(5-phospho-D-ribosyl)glycinamide: step 2/2. It functions in the pathway purine metabolism; IMP biosynthesis via de novo pathway; N(1)-(5-phospho-D-ribosyl)glycinamide from 5-phospho-alpha-D-ribose 1-diphosphate: step 2/2. Its pathway is purine metabolism; IMP biosynthesis via de novo pathway; N(2)-formyl-N(1)-(5-phospho-D-ribosyl)glycinamide from N(1)-(5-phospho-D-ribosyl)glycinamide (10-formyl THF route): step 1/1. Trifunctional enzyme that catalyzes three distinct reactions as part of the 'de novo' inosine monophosphate biosynthetic pathway. The polypeptide is Trifunctional purine biosynthetic protein adenosine-3 (GART) (Bos taurus (Bovine)).